A 194-amino-acid polypeptide reads, in one-letter code: Peptidyl-tRNA hydrolase (194 aa).

Tyrosine 17 serves as a coordination point for tRNA. Histidine 22 serves as the catalytic Proton acceptor. Positions 68, 70, and 116 each coordinate tRNA.

It belongs to the PTH family. As to quaternary structure, monomer.

The protein resides in the cytoplasm. The catalysed reaction is an N-acyl-L-alpha-aminoacyl-tRNA + H2O = an N-acyl-L-amino acid + a tRNA + H(+). Its function is as follows. Hydrolyzes ribosome-free peptidyl-tRNAs (with 1 or more amino acids incorporated), which drop off the ribosome during protein synthesis, or as a result of ribosome stalling. In terms of biological role, catalyzes the release of premature peptidyl moieties from peptidyl-tRNA molecules trapped in stalled 50S ribosomal subunits, and thus maintains levels of free tRNAs and 50S ribosomes. This is Peptidyl-tRNA hydrolase from Actinobacillus pleuropneumoniae serotype 7 (strain AP76).